Consider the following 271-residue polypeptide: MISIQNLTFYYGCNPILKDINLTIQNNSWVSIVGHNGSGKSTLAKILLGLLAFNKGQIVIDNIVLNEKNLPILRPKIGIVFQNPDYQFTGLTVREDIAFGLENYNVCREEIIAKVLKYAKMVKIDDLLDKNVNQLSGGQKQRVTIASILAMEPEIIIFDEATSFLDPQGALEVQKIIQTIKNKILITITHDLDFASKSDEIIVLYQGKLITQRPPKNLLQDPLFLQQYKLTPPLSLQLYYEILKDSTTKKIKNNQMLENLKDILWQYNLKK.

The 230-residue stretch at 2-231 (ISIQNLTFYY…PLFLQQYKLT (230 aa)) folds into the ABC transporter domain. 34–41 (GHNGSGKS) contributes to the ATP binding site.

It belongs to the ABC transporter superfamily. Energy-coupling factor EcfA family. As to quaternary structure, forms a stable energy-coupling factor (ECF) transporter complex composed of 2 membrane-embedded substrate-binding proteins (S component), 2 ATP-binding proteins (A component) and 2 transmembrane proteins (T component).

The protein resides in the cell membrane. In terms of biological role, ATP-binding (A) component of a common energy-coupling factor (ECF) ABC-transporter complex. Unlike classic ABC transporters this ECF transporter provides the energy necessary to transport a number of different substrates. The sequence is that of Energy-coupling factor transporter ATP-binding protein EcfA from Aster yellows witches'-broom phytoplasma (strain AYWB).